The primary structure comprises 217 residues: 3-dehydroquinate dehydratase (217 aa).

Residues 26–28 (EFR) and Arg59 each bind 3-dehydroquinate. His114 acts as the Proton donor/acceptor in catalysis. Lys140 functions as the Schiff-base intermediate with substrate in the catalytic mechanism. 3-dehydroquinate is bound by residues Arg178 and Gln201.

It belongs to the type-I 3-dehydroquinase family. In terms of assembly, homodimer.

The catalysed reaction is 3-dehydroquinate = 3-dehydroshikimate + H2O. Its pathway is metabolic intermediate biosynthesis; chorismate biosynthesis; chorismate from D-erythrose 4-phosphate and phosphoenolpyruvate: step 3/7. Functionally, involved in the third step of the chorismate pathway, which leads to the biosynthesis of aromatic amino acids. Catalyzes the cis-dehydration of 3-dehydroquinate (DHQ) and introduces the first double bond of the aromatic ring to yield 3-dehydroshikimate. This is 3-dehydroquinate dehydratase from Hydrogenobaculum sp. (strain Y04AAS1).